The following is a 578-amino-acid chain: Arginine--tRNA ligase (578 aa).

The 'HIGH' region signature appears at 127–137; sequence PNLAKEMHVGH.

Belongs to the class-I aminoacyl-tRNA synthetase family. As to quaternary structure, monomer.

The protein localises to the cytoplasm. It catalyses the reaction tRNA(Arg) + L-arginine + ATP = L-arginyl-tRNA(Arg) + AMP + diphosphate. The protein is Arginine--tRNA ligase of Pseudomonas syringae pv. tomato (strain ATCC BAA-871 / DC3000).